The primary structure comprises 314 residues: Methionyl-tRNA formyltransferase (314 aa).

Residue 113–116 (SLLP) coordinates (6S)-5,6,7,8-tetrahydrofolate.

Belongs to the Fmt family.

The enzyme catalyses L-methionyl-tRNA(fMet) + (6R)-10-formyltetrahydrofolate = N-formyl-L-methionyl-tRNA(fMet) + (6S)-5,6,7,8-tetrahydrofolate + H(+). Functionally, attaches a formyl group to the free amino group of methionyl-tRNA(fMet). The formyl group appears to play a dual role in the initiator identity of N-formylmethionyl-tRNA by promoting its recognition by IF2 and preventing the misappropriation of this tRNA by the elongation apparatus. This chain is Methionyl-tRNA formyltransferase, found in Pseudomonas aeruginosa (strain ATCC 15692 / DSM 22644 / CIP 104116 / JCM 14847 / LMG 12228 / 1C / PRS 101 / PAO1).